Reading from the N-terminus, the 108-residue chain is Trissin (108 aa).

An N-terminal signal peptide occupies residues 1–29 (MTKTTMHWLAHFQIILLCIWLMCPPSSQA). 3 disulfide bridges follow: Cys32–Cys43, Cys35–Cys52, and Cys39–Cys51. A propeptide spanning residues 57-108 (RKRSDPDALRQSSNRRLIDFILLQGRALFTQELRERRHNGTLMDLGLNTYYP) is cleaved from the precursor.

The protein resides in the secreted. In terms of biological role, activates the G-protein coupled receptor TrissinR in vitro, leading to increased intracellular calcium ion levels. The polypeptide is Trissin (Drosophila melanogaster (Fruit fly)).